The sequence spans 141 residues: Large ribosomal subunit protein uL11 (141 aa).

Belongs to the universal ribosomal protein uL11 family. As to quaternary structure, part of the ribosomal stalk of the 50S ribosomal subunit. Interacts with L10 and the large rRNA to form the base of the stalk. L10 forms an elongated spine to which L12 dimers bind in a sequential fashion forming a multimeric L10(L12)X complex. One or more lysine residues are methylated.

Forms part of the ribosomal stalk which helps the ribosome interact with GTP-bound translation factors. This is Large ribosomal subunit protein uL11 from Campylobacter fetus subsp. fetus (strain 82-40).